Consider the following 165-residue polypeptide: Pro-MCH (165 aa).

The signal sequence occupies residues 1-21 (MAKMNLSSYILILTFSLFSQG). I143 bears the Isoleucine amide mark. The cysteines at positions 153 and 162 are disulfide-linked.

This sequence belongs to the melanin-concentrating hormone family. Differentially processed in the brain and in peripheral organs producing two neuropeptides; NEI and MCH. A third peptide, NGE, may also be produced. Preferential processing in neurons by prohormone convertase 2 (PC2) generates NEI. MCH is generated in neurons of the lateral hypothalmic area by several prohormone convertases including PC1/3, PC2 and PC5/6. As to expression, predominantly expressed in lateral hypothalamus, also detected in pallidum, neocortex and cerebellum. Also found in thymus, brown adipose tissue, duodenum and testis (spermatogonia, early spermatocytes and Sertoli cells). No expression in peripheral blood. In brain exclusively mature MCH and NEI peptides are present. In peripheral tissues a large product, encompassing the NEI and MCH domains of the precursor, is found predominantly.

The protein resides in the secreted. MCH may act as a neurotransmitter or neuromodulator in a broad array of neuronal functions directed toward the regulation of goal-directed behavior, such as food intake, and general arousal. May also have a role in spermatocyte differentiation. The protein is Pro-MCH (PMCH) of Homo sapiens (Human).